A 205-amino-acid chain; its full sequence is Large ribosomal subunit protein bL17c (205 aa).

The transit peptide at 1–89 (MASASTTWSM…VIDNGGRVFA (89 aa)) directs the protein to the chloroplast.

The protein belongs to the bacterial ribosomal protein bL17 family. Part of the 50S ribosomal subunit.

It localises to the plastid. It is found in the chloroplast. Its function is as follows. This protein binds directly to 23S ribosomal RNA. This Nicotiana tabacum (Common tobacco) protein is Large ribosomal subunit protein bL17c (RPL17).